The chain runs to 370 residues: Mitogen-activated protein kinase mpkC (370 aa).

One can recognise a Protein kinase domain in the interval 19–298; it reads YANVRPVGLG…AAESLEHPYL (280 aa). ATP-binding positions include 25–33 and Lys48; that span reads VGLGAFGLV. Residue Asp140 is the Proton acceptor of the active site. A Phosphothreonine modification is found at Thr170. Positions 170 to 172 match the TXY motif; the sequence is TGY. Tyr172 carries the phosphotyrosine modification.

The protein belongs to the protein kinase superfamily. Ser/Thr protein kinase family. MAP kinase subfamily. HOG1 sub-subfamily. Mg(2+) serves as cofactor. In terms of processing, dually phosphorylated on Thr-170 and Tyr-172, which activates the enzyme.

It carries out the reaction L-seryl-[protein] + ATP = O-phospho-L-seryl-[protein] + ADP + H(+). The catalysed reaction is L-threonyl-[protein] + ATP = O-phospho-L-threonyl-[protein] + ADP + H(+). Its activity is regulated as follows. Activated by tyrosine and threonine phosphorylation. Its function is as follows. Mitogen-activated protein kinase required for growth on media where sorbitol or mannitol is the sole carbon source. The protein is Mitogen-activated protein kinase mpkC (mpkC) of Aspergillus terreus (strain NIH 2624 / FGSC A1156).